The chain runs to 71 residues: AKMNLSSYILILTFSLFSQGILLSASKSIRNSDDDMVFNTFRLGKAFQKEDTAEKSVIAPSLEEYKNDESS.

Positions 1–20 (AKMNLSSYILILTFSLFSQG) are cleaved as a signal peptide.

This sequence belongs to the melanin-concentrating hormone family.

The protein localises to the secreted. This Pan paniscus (Pygmy chimpanzee) protein is Pro-MCH (PMCH).